Here is a 425-residue protein sequence, read N- to C-terminus: Cyanogenic beta-glucosidase (425 aa).

An N-terminal signal peptide occupies residues 1 to 11; the sequence is LLSITTTHIHA. Residues glutamine 44, histidine 148, and 193-194 each bind a beta-D-glucoside; that span reads NE. Glutamate 194 functions as the Proton donor in the catalytic mechanism. Residues cysteine 213 and cysteine 221 are joined by a disulfide bond. A glycan (N-linked (GlcNAc...) asparagine) is linked at asparagine 220. Residues tyrosine 337 and glutamate 408 each contribute to the a beta-D-glucoside site. Glutamate 408 functions as the Nucleophile in the catalytic mechanism. A glycan (N-linked (GlcNAc...) asparagine) is linked at asparagine 412.

This sequence belongs to the glycosyl hydrolase 1 family. As to quaternary structure, homodimer. Leaves.

The enzyme catalyses Hydrolysis of terminal, non-reducing beta-D-glucosyl residues with release of beta-D-glucose.. Its function is as follows. Hydrolyzes cyanoglucosides, contributing to the release of hydrocyanic acid, which functions as a defense mechanism against small predators, when the leaf tissue is damaged. This chain is Cyanogenic beta-glucosidase (LI), found in Trifolium repens (Creeping white clover).